Consider the following 177-residue polypeptide: MSGTEEIRWVTLGYVMGAFGLKGEMRVRSLTERPDGIFDHPVWWLFNPKQKTRQEMRLGSGRLHGKGVVATLAGVTTREAVQALFGTEIQVPRSMLPDGGDDPGVDGIWADLIGCQVVEVDGTELGRVVEMMATGANDVLIVRGGPEGEKLLPYIEEVVVELDLDRQIIKVKLMEGM.

A PRC barrel domain is found at 104–177 (GVDGIWADLI…IIKVKLMEGM (74 aa)).

This sequence belongs to the RimM family. In terms of assembly, binds ribosomal protein uS19.

The protein localises to the cytoplasm. In terms of biological role, an accessory protein needed during the final step in the assembly of 30S ribosomal subunit, possibly for assembly of the head region. Essential for efficient processing of 16S rRNA. May be needed both before and after RbfA during the maturation of 16S rRNA. It has affinity for free ribosomal 30S subunits but not for 70S ribosomes. The polypeptide is Ribosome maturation factor RimM (Magnetococcus marinus (strain ATCC BAA-1437 / JCM 17883 / MC-1)).